A 170-amino-acid chain; its full sequence is MORN repeat-containing protein 5 (170 aa).

MORN repeat units follow at residues 8–30 (YFGE…TDTR), 31–53 (YIGE…SGSR), and 54–75 (FDAI…DGLQ).

Only detected in testis (at protein level).

The protein localises to the cell projection. Its subcellular location is the cilium. It is found in the flagellum. The protein is MORN repeat-containing protein 5 (Morn5) of Mus musculus (Mouse).